A 110-amino-acid polypeptide reads, in one-letter code: Large ribosomal subunit protein uL24 (110 aa).

The protein belongs to the universal ribosomal protein uL24 family. In terms of assembly, part of the 50S ribosomal subunit.

In terms of biological role, one of two assembly initiator proteins, it binds directly to the 5'-end of the 23S rRNA, where it nucleates assembly of the 50S subunit. Its function is as follows. One of the proteins that surrounds the polypeptide exit tunnel on the outside of the subunit. The protein is Large ribosomal subunit protein uL24 of Roseiflexus sp. (strain RS-1).